A 592-amino-acid chain; its full sequence is Endoribonuclease Arlr (592 aa).

Residues 1-24 form the signal peptide; it reads MRCLALSAVFLCLTLAGHFHLSDA. The disordered stretch occupies residues 83-329; sequence PTAANKPPPL…FQSSGNSVAT (247 aa). The span at 109–120 shows a compositional bias: polar residues; that stretch reads PGSSPFGASQNP. Composition is skewed to low complexity over residues 134–144 and 188–209; these read PSHPSQPSQPS and GISS…TGKT. 2 stretches are compositionally biased toward pro residues: residues 234 to 249 and 258 to 267; these read LPAP…PTPG and LPTPQHPVHP. Residues 268 to 294 show a composition bias toward low complexity; sequence PTKATSAATPTPTPTPSFSSSVTPTPA. The region spanning 329–592 is the EndoU domain; that stretch reads TDDEIRQLTE…NLIGSAYPEI (264 aa). Catalysis depends on residues histidine 473, histidine 488, and lysine 531.

It belongs to the ENDOU family. As to quaternary structure, monomer. It depends on Mn(2+) as a cofactor. In terms of tissue distribution, predominantly expressed in head. Expressed in fat body cells.

The protein localises to the endoplasmic reticulum lumen. It localises to the secreted. It catalyses the reaction a ribonucleotidyl-ribonucleotide-RNA + H2O = a 3'-end 3'-phospho-ribonucleotide-RNA + a 5'-end dephospho-ribonucleoside-RNA + H(+). Functionally, endoribonuclease that cleaves single-stranded RNAs; unlike its paralog EndoU it does not appear to preferentially cleave at uridylates and releases linear products instead of products that have 2'-3'-cyclic phosphate termini. Preferentially cleaves single stranded RNA at sites with AU, UC and poly-U sites cleaved less efficiently. Targets mRNAs encoding proteins involved in lipid metabolism, particularly those involved in lipolysis, to regulate their expression. This chain is Endoribonuclease Arlr, found in Drosophila melanogaster (Fruit fly).